A 171-amino-acid polypeptide reads, in one-letter code: Large ribosomal subunit protein bL9 (171 aa).

It belongs to the bacterial ribosomal protein bL9 family.

Its function is as follows. Binds to the 23S rRNA. The protein is Large ribosomal subunit protein bL9 of Rickettsia prowazekii (strain Madrid E).